We begin with the raw amino-acid sequence, 44 residues long: Mu-conotoxin-like Cal 12.1.3b (44 aa).

4 disulfides stabilise this stretch: cysteine 3–cysteine 16, cysteine 11–cysteine 28, cysteine 18–cysteine 33, and cysteine 27–cysteine 38. Proline 23 carries the 4-hydroxyproline modification. Tryptophan 36 and tryptophan 37 each carry 6'-bromotryptophan. Residue proline 39 is modified to 4-hydroxyproline. Tryptophan 43 is modified (6'-bromotryptophan).

In terms of tissue distribution, expressed by the venom duct.

The protein localises to the secreted. Functionally, mu-conotoxins block voltage-gated sodium channels. This toxin reversibly blocks voltage-gated sodium channel in cephalopods, with no alteration in the voltage dependence of sodium conductance or on the kinetics of inactivation. This is Mu-conotoxin-like Cal 12.1.3b from Californiconus californicus (California cone).